Reading from the N-terminus, the 229-residue chain is Large ribosomal subunit protein uL1 (229 aa).

This sequence belongs to the universal ribosomal protein uL1 family. In terms of assembly, part of the 50S ribosomal subunit.

Binds directly to 23S rRNA. The L1 stalk is quite mobile in the ribosome, and is involved in E site tRNA release. In terms of biological role, protein L1 is also a translational repressor protein, it controls the translation of the L11 operon by binding to its mRNA. The polypeptide is Large ribosomal subunit protein uL1 (Gemmatimonas aurantiaca (strain DSM 14586 / JCM 11422 / NBRC 100505 / T-27)).